We begin with the raw amino-acid sequence, 294 residues long: Elongation factor Ts (294 aa).

Residues 80–83 (TDFV) are involved in Mg(2+) ion dislocation from EF-Tu.

It belongs to the EF-Ts family.

The protein resides in the cytoplasm. Associates with the EF-Tu.GDP complex and induces the exchange of GDP to GTP. It remains bound to the aminoacyl-tRNA.EF-Tu.GTP complex up to the GTP hydrolysis stage on the ribosome. The polypeptide is Elongation factor Ts (Polynucleobacter necessarius subsp. necessarius (strain STIR1)).